The following is a 1065-amino-acid chain: MEIFILPEFGKIQFEGFNRFINQGLSEELSNFPIIEDIDQEFEFQIFGEQYKLAEPLLKERDAVYQSITYSSDVYVPAQLTQKKKGKIQKQIVFLGSIPLMNSQGTFVVNGVARVIINQILRSPGIYYNSELDHNGIPIYTGTLISNWGGRLKLEIDGKTRIWARISKKRKVSILVLLLAMGLNLQNILDSVCYPKIFLEFIKKNTKKEYPNSTEDAIVELYKHLYCIGGDLFFSESIRKELQKKFFQQRCELGKIGRLNLNKKLNLNVPENEIFVLPQDILAAVDYLIKLKFGIGTIDDIDHLKNRRVCSVADLLQDQLKLALNRLENSVLFFFRGATKRKRLPTPKSLVTSTPLIMTFKEFFGSHPLSQFLDQTNPLTEIVHKRRLSSLGPGGLTRRTASFQVRDIHASHYGRICPIETSEGMNAGLIASLAIHAKISILGCLESPFYKISKLSNLEEIINLSAAEDEYYRIATGNCLALDQNSQEEQITPARYRQDFVAIAWEQVHLRSIFPLQYFSVGASLIPFLEHNDANRALMGSNMQRQAVPLLKPEKCIVGTGIESQTALDSGSVTVSSHGGKIEYLDGNQIILSLKKKKIDKNLIIYQRSNNSTCMHQKPKVEKQKYIKKGQILADGAATANGELALGKNILVAYMPWEGYNFEDAILINERLIYEDIYTSIHIERYEIEARVTSQGPEKFTNEIPHLDDYLLRHLDQNGIVLTGSWVETGDVLVGKLTPQETEENLRAPEGKLLQAIFGIQVATSKETCLKVPPGGRGRVIDIRLISQEDNSANTAQIIHIYILQKRKIQIGDKVAGRHGNKGIISKILPRQDMPFLQDGTPIDMILSPLGVPSRMNVGQIFECLLGLAGSFLHKNYRIIPFDERYEREASRKLVFSELYKASKKTTNPWLFEPDNPGKNRLIDGRTGEIFEQPITIGKAYMLKLIHQVDDKIHARSSGPYALVTQQPLRGRSRRGGQRVGEMEVWALEGFGVAYILQEMLTIKSDHIRARYEVLGAIVTGEPIPKPNTAPESFKLLVRELRSLALEINHVIICEKNLKLKLKEI.

The protein belongs to the RNA polymerase beta chain family. In plastids the minimal PEP RNA polymerase catalytic core is composed of four subunits: alpha, beta, beta', and beta''. When a (nuclear-encoded) sigma factor is associated with the core the holoenzyme is formed, which can initiate transcription.

The protein localises to the plastid. The protein resides in the chloroplast. The enzyme catalyses RNA(n) + a ribonucleoside 5'-triphosphate = RNA(n+1) + diphosphate. In terms of biological role, DNA-dependent RNA polymerase catalyzes the transcription of DNA into RNA using the four ribonucleoside triphosphates as substrates. The polypeptide is DNA-directed RNA polymerase subunit beta (Marchantia polymorpha (Common liverwort)).